Reading from the N-terminus, the 210-residue chain is Urease accessory protein UreF (210 aa).

Belongs to the UreF family. In terms of assembly, ureD, UreF and UreG form a complex that acts as a GTP-hydrolysis-dependent molecular chaperone, activating the urease apoprotein by helping to assemble the nickel containing metallocenter of UreC. The UreE protein probably delivers the nickel.

It is found in the cytoplasm. Its function is as follows. Required for maturation of urease via the functional incorporation of the urease nickel metallocenter. The sequence is that of Urease accessory protein UreF from Cereibacter sphaeroides (strain ATCC 17023 / DSM 158 / JCM 6121 / CCUG 31486 / LMG 2827 / NBRC 12203 / NCIMB 8253 / ATH 2.4.1.) (Rhodobacter sphaeroides).